The following is a 167-amino-acid chain: Thiol peroxidase (167 aa).

Positions valine 18–lysine 167 constitute a Thioredoxin domain. Catalysis depends on cysteine 60, which acts as the Cysteine sulfenic acid (-SOH) intermediate. An intrachain disulfide couples cysteine 60 to cysteine 94.

It belongs to the peroxiredoxin family. Tpx subfamily. Homodimer.

The enzyme catalyses a hydroperoxide + [thioredoxin]-dithiol = an alcohol + [thioredoxin]-disulfide + H2O. In terms of biological role, thiol-specific peroxidase that catalyzes the reduction of hydrogen peroxide and organic hydroperoxides to water and alcohols, respectively. Plays a role in cell protection against oxidative stress by detoxifying peroxides. The polypeptide is Thiol peroxidase (Bacillus subtilis (strain 168)).